A 473-amino-acid polypeptide reads, in one-letter code: Lipid A galacturonosyltransferase RgtD (473 aa).

Transmembrane regions (helical) follow at residues 6-26, 68-88, 94-114, 118-138, 160-180, 190-210, 238-258, 271-291, 295-315, and 327-347; these read GLLIVLGFTLWRVVMLNFDAT, AIYWIRLLGPLIHMAAALVLM, FVGPEIEGWTGATYITLPGVA, VFFSTDVILLFFIAIALLAYF, FLTKYAVLFVVPGGAIALLLI, VIIAVAVAAVVALPNLWWNLQ, FFAAQFGVVGPIIFFAMLWAV, KMLVWLSMPVVLLITLQATVA, ANWAVTAYVAGTILAVWLLYL, and INGIASLLFPLATIFPHQLLL.

The protein localises to the cell membrane. It functions in the pathway bacterial outer membrane biogenesis; LPS lipid A biosynthesis. Its function is as follows. Involved in the modification of the lipopolysaccharide (LPS) lipid A moiety. Catalyzes the transfer of a galacturonic acid (GalA) residue to the 4'-position of 4'-dephosphorylated lipid A, using dodecaprenyl phosphate-GalA as the donor substrate. Acts before the other GalA transferases RgtA, RgtB and RgtC. The polypeptide is Lipid A galacturonosyltransferase RgtD (Rhizobium johnstonii (strain DSM 114642 / LMG 32736 / 3841) (Rhizobium leguminosarum bv. viciae)).